We begin with the raw amino-acid sequence, 704 residues long: Elongation factor G (704 aa).

The region spanning D8–V291 is the tr-type G domain. GTP contacts are provided by residues A17–T24, D90–H94, and N144–D147.

Belongs to the TRAFAC class translation factor GTPase superfamily. Classic translation factor GTPase family. EF-G/EF-2 subfamily.

It localises to the cytoplasm. In terms of biological role, catalyzes the GTP-dependent ribosomal translocation step during translation elongation. During this step, the ribosome changes from the pre-translocational (PRE) to the post-translocational (POST) state as the newly formed A-site-bound peptidyl-tRNA and P-site-bound deacylated tRNA move to the P and E sites, respectively. Catalyzes the coordinated movement of the two tRNA molecules, the mRNA and conformational changes in the ribosome. This Chlorobaculum parvum (strain DSM 263 / NCIMB 8327) (Chlorobium vibrioforme subsp. thiosulfatophilum) protein is Elongation factor G.